The sequence spans 266 residues: UPF0294 protein Ent638_0743 (266 aa).

It belongs to the UPF0294 family.

The protein localises to the cytoplasm. The chain is UPF0294 protein Ent638_0743 from Enterobacter sp. (strain 638).